A 336-amino-acid polypeptide reads, in one-letter code: Protein RecA (336 aa).

66–73 (GNESSGKT) is an ATP binding site.

Belongs to the RecA family.

Its subcellular location is the cytoplasm. Functionally, can catalyze the hydrolysis of ATP in the presence of single-stranded DNA, the ATP-dependent uptake of single-stranded DNA by duplex DNA, and the ATP-dependent hybridization of homologous single-stranded DNAs. It interacts with LexA causing its activation and leading to its autocatalytic cleavage. The chain is Protein RecA from Mycoplasma pneumoniae (strain ATCC 29342 / M129 / Subtype 1) (Mycoplasmoides pneumoniae).